A 405-amino-acid polypeptide reads, in one-letter code: Replication factor C large subunit (405 aa).

47–54 (GPPGVGKT) is a binding site for ATP.

It belongs to the activator 1 small subunits family. RfcL subfamily. In terms of assembly, heteromultimer composed of small subunits (RfcS) and large subunits (RfcL).

Its function is as follows. Part of the RFC clamp loader complex which loads the PCNA sliding clamp onto DNA. This chain is Replication factor C large subunit, found in Saccharolobus islandicus (strain M.16.4 / Kamchatka #3) (Sulfolobus islandicus).